A 750-amino-acid chain; its full sequence is Ribosomal RNA large subunit methyltransferase K/L (750 aa).

The 112-residue stretch at 46 to 157 (TAYRLCLWSR…RGEAILSLDL (112 aa)) folds into the THUMP domain.

This sequence belongs to the methyltransferase superfamily. RlmKL family.

Its subcellular location is the cytoplasm. It catalyses the reaction guanosine(2445) in 23S rRNA + S-adenosyl-L-methionine = N(2)-methylguanosine(2445) in 23S rRNA + S-adenosyl-L-homocysteine + H(+). It carries out the reaction guanosine(2069) in 23S rRNA + S-adenosyl-L-methionine = N(2)-methylguanosine(2069) in 23S rRNA + S-adenosyl-L-homocysteine + H(+). Specifically methylates the guanine in position 2445 (m2G2445) and the guanine in position 2069 (m7G2069) of 23S rRNA. The sequence is that of Ribosomal RNA large subunit methyltransferase K/L from Pseudomonas syringae pv. syringae (strain B728a).